Consider the following 251-residue polypeptide: uncharacterized protein (251 aa).

It belongs to the methyltransferase superfamily.

Its subcellular location is the cytoplasm. The protein resides in the nucleus. Functionally, probable methyltransferase. This is an uncharacterized protein from Schizosaccharomyces pombe (strain 972 / ATCC 24843) (Fission yeast).